The sequence spans 108 residues: UPF0060 membrane protein YnfA (108 aa).

Topologically, residues 1–5 (MLKTT) are periplasmic. The chain crosses the membrane as a helical span at residues 6-26 (LLFFVTALCEIIGCFLTWLWI). The Cytoplasmic segment spans residues 27 to 30 (KRGA). A helical membrane pass occupies residues 31-51 (SVWWLLPAAASLALFVWLLTL). At 52 to 60 (HPAASGRVY) the chain is on the periplasmic side. Residues 61–81 (AAYGGVYVCTALLWLRVVDGV) traverse the membrane as a helical segment. Topologically, residues 82 to 84 (RLT) are cytoplasmic. A helical membrane pass occupies residues 85 to 105 (VYDWCGAPIALCGMLIIVVGW). The Periplasmic segment spans residues 106 to 108 (GRT).

The protein belongs to the UPF0060 family.

The protein localises to the cell inner membrane. This chain is UPF0060 membrane protein YnfA, found in Salmonella dublin (strain CT_02021853).